The primary structure comprises 445 residues: Exodeoxyribonuclease 7 large subunit (445 aa).

This sequence belongs to the XseA family. As to quaternary structure, heterooligomer composed of large and small subunits.

The protein resides in the cytoplasm. It catalyses the reaction Exonucleolytic cleavage in either 5'- to 3'- or 3'- to 5'-direction to yield nucleoside 5'-phosphates.. Bidirectionally degrades single-stranded DNA into large acid-insoluble oligonucleotides, which are then degraded further into small acid-soluble oligonucleotides. This is Exodeoxyribonuclease 7 large subunit from Staphylococcus haemolyticus (strain JCSC1435).